The chain runs to 886 residues: Cadherin-1 (886 aa).

The N-terminal stretch at 1-23 (MGARCRSFSALLLLLQVSSWLCQ) is a signal peptide. The propeptide occupies 24–158 (QPESESDSCR…FHQGLRRQKR (135 aa)). Over 24-713 (QPESESDSCR…SLEAGLQVPA (690 aa)) the chain is Extracellular. Cadherin domains are found at residues 159–266 (DWVI…RPEF), 267–379 (IQEV…APIF), 380–490 (NPST…APIF), 491–597 (VPAE…DNAP), and 598–701 (IPEP…NCMK). Aspartate 261 lines the Ca(2+) pocket. Residues serine 284 and serine 289 are each glycosylated (O-linked (Man...) serine). Residue aspartate 292 coordinates Ca(2+). O-linked (Man...) threonine glycans are attached at residues threonine 362, threonine 474, threonine 476, and threonine 513. Asparagine 562 is a glycosylation site (N-linked (GlcNAc...) asparagine). 3 O-linked (Man...) threonine glycosylation sites follow: threonine 580, threonine 582, and threonine 584. N-linked (GlcNAc...) asparagine glycosylation is present at asparagine 641. A helical transmembrane segment spans residues 714–734 (ILGILGGILALLILILLLLLF). The Cytoplasmic portion of the chain corresponds to 735–886 (LRRRTVVKEP…ADMYGGGEED (152 aa)). Positions 751–771 (DTRDNVYYYDEEGGGEEDQDF) are disordered. Tyrosine 757, tyrosine 758, and tyrosine 759 each carry phosphotyrosine; by SRC. Over residues 759 to 771 (YDEEGGGEEDQDF) the composition is skewed to acidic residues. The segment at 762-773 (EGGGEEDQDFDL) is required for binding CTNND1 and PSEN1. 5 positions are modified to phosphoserine: serine 774, serine 797, serine 842, serine 844, and serine 850. Positions 815–886 (IDENLKAADS…ADMYGGGEED (72 aa)) are required for binding alpha, beta and.

In terms of assembly, homodimer; disulfide-linked. Component of an E-cadherin/ catenin adhesion complex composed of at least E-cadherin/CDH1, beta-catenin/CTNNB1 or gamma-catenin/JUP, and potentially alpha-catenin/CTNNA1; the complex is located to adherens junctions. Found in a complex composed of CDH1, RAP1A and PKP3; PKP3 acts as a scaffold protein within the complex, the complex is required for CDH1 localization to mature desmosome cell junctions. Interacts with the TRPV4 and CTNNB1 complex. Interacts with CTNND1. The stable association of CTNNA1 is controversial as CTNNA1 was shown not to bind to F-actin when assembled in the complex. Alternatively, the CTNNA1-containing complex may be linked to F-actin by other proteins such as LIMA1. Interaction with PSEN1, cleaves CDH1 resulting in the disassociation of cadherin-based adherens junctions (CAJs). Interacts with AJAP1 and DLGAP5. Interacts with TBC1D2. Interacts with LIMA1. Interacts with CAV1. Interacts with PIP5K1C. Interacts with DDR1; this stabilizes CDH1 at the cell surface and inhibits its internalization. Interacts with RAPGEF2. Interacts with RAB8B. Interacts with KLRG1. Forms a ternary complex composed of ADAM10, CADH1 and EPHA4; within the complex, CADH1 is cleaved by ADAM10 which disrupts adherens junctions. Interacts with SPEF1. Interacts with CTNNB1 and PKP2. Interacts with AMOTL2; the interaction may facilitate binding of radial actin fibers to cell junction complexes. Interacts with DSG3; the interaction is required for CDH1 localization to developing adherens junctions. During apoptosis or with calcium influx, cleaved by a membrane-bound metalloproteinase (ADAM10), PS1/gamma-secretase and caspase-3. Processing by the metalloproteinase, induced by calcium influx, causes disruption of cell-cell adhesion and the subsequent release of beta-catenin into the cytoplasm. The residual membrane-tethered cleavage product is rapidly degraded via an intracellular proteolytic pathway. Cleavage by caspase-3 releases the cytoplasmic tail resulting in disintegration of the actin microfilament system. The gamma-secretase-mediated cleavage promotes disassembly of adherens junctions. During development of the cochlear organ of Corti, cleavage by ADAM10 at adherens junctions promotes pillar cell separation. In terms of processing, N-glycosylation at Asn-641 is essential for expression, folding and trafficking. Addition of bisecting N-acetylglucosamine by MGAT3 modulates its cell membrane location. Post-translationally, ubiquitinated by a SCF complex containing SKP2, which requires prior phosphorylation by CK1/CSNK1A1. Ubiquitinated by CBLL1/HAKAI, requires prior phosphorylation at Tyr-758. O-glycosylated. O-manosylated by TMTC1, TMTC2, TMTC3 or TMTC4. Ser-289 and Thr-513 are O-manosylated by TMTC2 or TMTC4 but not TMTC1 or TMTC3.

It localises to the cell junction. Its subcellular location is the adherens junction. It is found in the cell membrane. The protein resides in the endosome. The protein localises to the golgi apparatus. It localises to the trans-Golgi network. Its subcellular location is the cytoplasm. It is found in the desmosome. Cadherins are calcium-dependent cell adhesion proteins. They preferentially interact with themselves in a homophilic manner in connecting cells; cadherins may thus contribute to the sorting of heterogeneous cell types. CDH1 is involved in mechanisms regulating cell-cell adhesions, mobility and proliferation of epithelial cells. Promotes organization of radial actin fiber structure and cellular response to contractile forces, via its interaction with AMOTL2 which facilitates anchoring of radial actin fibers to CDH1 junction complexes at the cell membrane. Plays a role in the early stages of desmosome cell-cell junction formation via facilitating the recruitment of DSG2 and DSP to desmosome plaques. Has a potent invasive suppressor role. It is a ligand for integrin alpha-E/beta-7. Its function is as follows. E-Cad/CTF2 promotes non-amyloidogenic degradation of Abeta precursors. Has a strong inhibitory effect on APP C99 and C83 production. The polypeptide is Cadherin-1 (Cdh1) (Rattus norvegicus (Rat)).